A 599-amino-acid polypeptide reads, in one-letter code: Sodium-dependent phosphate transport protein 2C (599 aa).

Topologically, residues 1 to 76 are cytoplasmic; sequence MPSSLPGSQV…RRVAGSVLKA (76 aa). Phosphoserine is present on S4. The chain crosses the membrane as a helical span at residues 77 to 97; the sequence is CGLLGSLYFFICSLDVLSSAF. At 98 to 111 the chain is on the extracellular side; it reads QLLGSKVAGDIFKD. A helical membrane pass occupies residues 112–132; that stretch reads NVVLSNPVAGLVIGVLVTALV. Residues 133 to 188 lie on the Cytoplasmic side of the membrane; sequence QSSSTSSSIVVSMVAAKLLTVRVSVPIIMGVNVGTSITSTLVSMAQSGDRDEFQRA. The helical transmembrane segment at 189–209 threads the bilayer; that stretch reads FSGSAVHGIFNWLTVLVLLPL. Over 210–322 the chain is Extracellular; the sequence is ESATALLERL…FAGTELTDLA (113 aa). 4 N-linked (GlcNAc...) asparagine glycosylation sites follow: N265, N268, N286, and N299. C276 and C309 are joined by a disulfide. Residues 323-343 traverse the membrane as a helical segment; sequence VGCILLAGSLLVLCGCLVLIV. Residues 344–367 lie on the Cytoplasmic side of the membrane; sequence KLLNSVLRGRVAQVVRTVINADFP. Residues 368–388 traverse the membrane as a helical segment; the sequence is FPLGWLGGYLAVLAGAGLTFA. The Extracellular segment spans residues 389–445; that stretch reads LQSSSVFTAAVVPLMGVGVISLDRAYPLLLGSNIGTTTTALLAALASPADRMLSALQ. The helical transmembrane segment at 446 to 466 threads the bilayer; it reads VALIHFFFNLAGILLWYLVPA. At 467–485 the chain is on the cytoplasmic side; the sequence is LRLPIPLARHFGVVTARYR. Residues 486 to 506 traverse the membrane as a helical segment; the sequence is WVAGVYLLLGFLLLPLAAFGL. Over 507–510 the chain is Extracellular; the sequence is SLAG. A helical transmembrane segment spans residues 511-531; sequence GMELAAVGGPLVGLVLLVILV. At 532–599 the chain is on the cytoplasmic side; that stretch reads TVLQRRRPAW…NPEILASQQL (68 aa).

The protein belongs to the SLC34A transporter family. In terms of tissue distribution, expressed only in the kidney.

It localises to the apical cell membrane. The catalysed reaction is 2 Na(+)(out) + phosphate(out) = 2 Na(+)(in) + phosphate(in). Functionally, involved in actively transporting phosphate into cells via Na(+) cotransport in the renal brush border membrane. The cotransport has a Na(+):Pi stoichiometry of 2:1 and is electroneutral. The polypeptide is Sodium-dependent phosphate transport protein 2C (SLC34A3) (Homo sapiens (Human)).